The chain runs to 362 residues: tRNA 2-selenouridine synthase (362 aa).

Residues 14 to 137 (LANETPIIDV…LRQATIEMTN (124 aa)) enclose the Rhodanese domain. Cys97 serves as the catalytic S-selanylcysteine intermediate.

It belongs to the SelU family. As to quaternary structure, monomer.

It carries out the reaction 5-methylaminomethyl-2-thiouridine(34) in tRNA + selenophosphate + (2E)-geranyl diphosphate + H2O + H(+) = 5-methylaminomethyl-2-selenouridine(34) in tRNA + (2E)-thiogeraniol + phosphate + diphosphate. The catalysed reaction is 5-methylaminomethyl-2-thiouridine(34) in tRNA + (2E)-geranyl diphosphate = 5-methylaminomethyl-S-(2E)-geranyl-thiouridine(34) in tRNA + diphosphate. It catalyses the reaction 5-methylaminomethyl-S-(2E)-geranyl-thiouridine(34) in tRNA + selenophosphate + H(+) = 5-methylaminomethyl-2-(Se-phospho)selenouridine(34) in tRNA + (2E)-thiogeraniol. The enzyme catalyses 5-methylaminomethyl-2-(Se-phospho)selenouridine(34) in tRNA + H2O = 5-methylaminomethyl-2-selenouridine(34) in tRNA + phosphate. In terms of biological role, involved in the post-transcriptional modification of the uridine at the wobble position (U34) of tRNA(Lys), tRNA(Glu) and tRNA(Gln). Catalyzes the conversion of 2-thiouridine (S2U-RNA) to 2-selenouridine (Se2U-RNA). Acts in a two-step process involving geranylation of 2-thiouridine (S2U) to S-geranyl-2-thiouridine (geS2U) and subsequent selenation of the latter derivative to 2-selenouridine (Se2U) in the tRNA chain. The sequence is that of tRNA 2-selenouridine synthase from Proteus mirabilis (strain HI4320).